Reading from the N-terminus, the 345-residue chain is Probable deoxyhypusine synthase 2 (345 aa).

Lysine 292 functions as the Nucleophile in the catalytic mechanism.

It belongs to the deoxyhypusine synthase family. NAD(+) serves as cofactor.

It carries out the reaction [eIF5A protein]-L-lysine + spermidine = [eIF5A protein]-deoxyhypusine + propane-1,3-diamine. Its pathway is protein modification; eIF5A hypusination. Its function is as follows. Catalyzes the NAD-dependent oxidative cleavage of spermidine and the subsequent transfer of the butylamine moiety of spermidine to the epsilon-amino group of a specific lysine residue of the eIF-5A precursor protein to form the intermediate deoxyhypusine residue. This Methanosarcina acetivorans (strain ATCC 35395 / DSM 2834 / JCM 12185 / C2A) protein is Probable deoxyhypusine synthase 2 (dys2).